A 599-amino-acid chain; its full sequence is Calmodulin-binding protein 60 E (599 aa).

Positions 1-21 are disordered; sequence MNKRGYECSQEDTDKLPESKR. Positions 1 to 80 are calmodulin-binding; it reads MNKRGYECSQ…LTSRSPEPKR (80 aa). The tract at residues 150–273 is DNA-binding; the sequence is EDDEDWTREH…VLHKKLLKAN (124 aa).

This sequence belongs to the plant ACBP60 protein family. In terms of assembly, interacts with calmodulin (CaM).

It is found in the nucleus. Its function is as follows. Transcription activator that binds DNA in a sequence-specific manner, likely 5'-GAAATTTTGG-3', to promote the expression of target genes. This chain is Calmodulin-binding protein 60 E, found in Arabidopsis thaliana (Mouse-ear cress).